We begin with the raw amino-acid sequence, 425 residues long: Serine hydroxymethyltransferase (425 aa).

Residues Leu128 and 132–134 (GHL) each bind (6S)-5,6,7,8-tetrahydrofolate. Residue Lys237 is modified to N6-(pyridoxal phosphate)lysine.

The protein belongs to the SHMT family. Homodimer. Requires pyridoxal 5'-phosphate as cofactor.

The protein resides in the cytoplasm. The catalysed reaction is (6R)-5,10-methylene-5,6,7,8-tetrahydrofolate + glycine + H2O = (6S)-5,6,7,8-tetrahydrofolate + L-serine. The protein operates within one-carbon metabolism; tetrahydrofolate interconversion. Its pathway is amino-acid biosynthesis; glycine biosynthesis; glycine from L-serine: step 1/1. Catalyzes the reversible interconversion of serine and glycine with tetrahydrofolate (THF) serving as the one-carbon carrier. This reaction serves as the major source of one-carbon groups required for the biosynthesis of purines, thymidylate, methionine, and other important biomolecules. Also exhibits THF-independent aldolase activity toward beta-hydroxyamino acids, producing glycine and aldehydes, via a retro-aldol mechanism. This is Serine hydroxymethyltransferase from Wolbachia sp. subsp. Drosophila simulans (strain wRi).